We begin with the raw amino-acid sequence, 320 residues long: HPr kinase/phosphorylase (320 aa).

Catalysis depends on residues H141 and K162. Residue 156-163 participates in ATP binding; sequence GHSGLGKS. Position 163 (S163) interacts with Mg(2+). Residue D180 is the Proton acceptor; for phosphorylation activity. Proton donor; for dephosphorylation activity of the active site. The interval 204-213 is important for the catalytic mechanism of both phosphorylation and dephosphorylation; that stretch reads LEVRGLGILN. Mg(2+) is bound at residue E205. R248 is a catalytic residue. Residues 269-274 form an important for the catalytic mechanism of dephosphorylation region; it reads PVAVGR.

This sequence belongs to the HPrK/P family. Homohexamer. Mg(2+) is required as a cofactor.

The enzyme catalyses [HPr protein]-L-serine + ATP = [HPr protein]-O-phospho-L-serine + ADP + H(+). It carries out the reaction [HPr protein]-O-phospho-L-serine + phosphate + H(+) = [HPr protein]-L-serine + diphosphate. Its function is as follows. Catalyzes the ATP- as well as the pyrophosphate-dependent phosphorylation of a specific serine residue in HPr, a phosphocarrier protein of the phosphoenolpyruvate-dependent sugar phosphotransferase system (PTS). HprK/P also catalyzes the pyrophosphate-producing, inorganic phosphate-dependent dephosphorylation (phosphorolysis) of seryl-phosphorylated HPr (P-Ser-HPr). This Neisseria gonorrhoeae (strain ATCC 700825 / FA 1090) protein is HPr kinase/phosphorylase.